The chain runs to 431 residues: MKVLVTAFAMDAHFNGVVPLAWALRAAGHDVRVASQPALTDSITRAGLTAVPVGTDHQVQAAMGAMAPGVFALHLNPDYLENRPELLDLEFLEASTSMLTAAFYAQINNDSMIDEMVDFAAWWRPDLVVWEPFTFGGAVAAQVTGAAQARLLWGPDLFLRVHDRFQQVLHEVPAERRDDALEEWLTWTLERHGAAFGPEVISGHWTIDQMPPSVRFATARPTVPMRFVPYNGPVPAVVPPWLRADPGRPRVLLTQGITERSTGFTGLPRAGELLASIAELDAEVVATVKAEEREGLPPLPGNVRVVDSLSLHVVLPSCAAVVHHGGAGTWATAALHGVPQLALAWQWDDVFRAGQLEKLGAGIFLPPHGEGASAGRVRDRLAQVLAEPSFRQGAARIRAEMLRTPAPGAVVPTLEQLTARHRAPAGQGVRH.

The first 23 residues, 1 to 23, serve as a signal peptide directing secretion; that stretch reads MKVLVTAFAMDAHFNGVVPLAWA.

This sequence belongs to the glycosyltransferase 28 family.

It carries out the reaction dTDP-beta-L-daunosamine + epsilon-rhodomycinone = rhodomycin D + dTDP + H(+). It functions in the pathway antibiotic biosynthesis; daunorubicin biosynthesis. The protein operates within antibiotic biosynthesis; carminomycin biosynthesis. Functionally, involved in the biosynthesis of the anthracyclines carminomycin and daunorubicin (daunomycin) which are aromatic polyketide antibiotics that exhibit high cytotoxicity and are widely applied in the chemotherapy of a variety of cancers. Catalyzes the addition of the TDP activated glycoside, L-daunosamine-TDP (2,3,6-trideoxy-3-aminohexose-TDP) at position C-7 of epsilon-rhodomycinone to yield rhodomycin D. Glycosylation is a prerequisite for biological activity of anthracyclines and requires DnrQ which seems to act as an activator. The sequence is that of TDP-daunosamine transferase DnrS (dnrS) from Streptomyces peucetius.